Reading from the N-terminus, the 43-residue chain is Potassium channel toxin gamma-KTx 3.3 (43 aa).

4 cysteine pairs are disulfide-bonded: cysteine 5–cysteine 23, cysteine 11–cysteine 34, cysteine 20–cysteine 39, and cysteine 24–cysteine 41.

This sequence belongs to the ergtoxin family. Gamma-KTx 3 subfamily. In terms of tissue distribution, expressed by the venom gland.

The protein resides in the secreted. Blocks Kv11/ERG potassium channels. The chain is Potassium channel toxin gamma-KTx 3.3 from Centruroides sculpturatus (Arizona bark scorpion).